A 301-amino-acid chain; its full sequence is Protein translocase subunit SecF (301 aa).

6 helical membrane-spanning segments follow: residues 17–37 (YIALALSCIMIILGIFAIFQI), 137–157 (DALFAILAATAGILIYIAIRF), 163–183 (IGATVATFHDVMAVLGIFYIL), 190–210 (IFISALLTIAGYSLTDTVVVF), 239–261 (LSRTIVTSLTTLMAAVALFFFGG), and 272–292 (ILGILVGTYSSIFVASPVVLL).

The protein belongs to the SecD/SecF family. SecF subfamily. As to quaternary structure, forms a complex with SecD. Part of the essential Sec protein translocation apparatus which comprises SecA, SecYEG and auxiliary proteins SecDF. Other proteins may also be involved.

It localises to the cell inner membrane. Part of the Sec protein translocase complex. Interacts with the SecYEG preprotein conducting channel. SecDF uses the proton motive force (PMF) to complete protein translocation after the ATP-dependent function of SecA. The protein is Protein translocase subunit SecF of Thermodesulfovibrio yellowstonii (strain ATCC 51303 / DSM 11347 / YP87).